The sequence spans 431 residues: Glutamate-1-semialdehyde 2,1-aminomutase (431 aa).

Lysine 264 is subject to N6-(pyridoxal phosphate)lysine.

Belongs to the class-III pyridoxal-phosphate-dependent aminotransferase family. HemL subfamily. Homodimer. Requires pyridoxal 5'-phosphate as cofactor.

It is found in the cytoplasm. The enzyme catalyses (S)-4-amino-5-oxopentanoate = 5-aminolevulinate. The protein operates within porphyrin-containing compound metabolism; protoporphyrin-IX biosynthesis; 5-aminolevulinate from L-glutamyl-tRNA(Glu): step 2/2. This chain is Glutamate-1-semialdehyde 2,1-aminomutase, found in Clostridium beijerinckii (strain ATCC 51743 / NCIMB 8052) (Clostridium acetobutylicum).